The sequence spans 348 residues: Erlin-1 (348 aa).

Residues 1-7 (MNMTQAR) lie on the Cytoplasmic side of the membrane. The helical transmembrane segment at 8–28 (VLVAAVVGLVAVLLYASIHKI) threads the bilayer. The Lumenal portion of the chain corresponds to 29–348 (EEGHLAVYYR…NVIQNKESTG (320 aa)). N-linked (GlcNAc...) asparagine glycosylation is present at Asn-108. Lys-269 is modified (N6-acetyllysine). Positions 325–348 (SSLPSKEALEPSGENVIQNKESTG) are disordered. The span at 339–348 (NVIQNKESTG) shows a compositional bias: polar residues.

Belongs to the band 7/mec-2 family. As to quaternary structure, forms a heteromeric complex with ERLIN2. In complex with ERLIN2, interacts with RNF170. Interacts with AMFR and SYVN1. Post-translationally, deubiquitinated by USP25; leading to stabilization. Expressed in heart, placenta, liver, kidney, pancreas, prostate, testis, ovary and small intestine.

The protein localises to the endoplasmic reticulum membrane. In terms of biological role, component of the ERLIN1/ERLIN2 complex which mediates the endoplasmic reticulum-associated degradation (ERAD) of inositol 1,4,5-trisphosphate receptors (IP3Rs). Involved in regulation of cellular cholesterol homeostasis by regulation the SREBP signaling pathway. Binds cholesterol and may promote ER retention of the SCAP-SREBF complex. Its function is as follows. (Microbial infection) Required early in hepatitis C virus (HCV) infection to initiate RNA replication, and later in the infection to support infectious virus production. In Homo sapiens (Human), this protein is Erlin-1.